A 275-amino-acid polypeptide reads, in one-letter code: Penicillin-insensitive murein endopeptidase (275 aa).

An N-terminal signal peptide occupies residues 1–19 (MKKWIAGLLALIAISPVMA). 3 cysteine pairs are disulfide-bonded: C44–C264, C187–C235, and C216–C223. Zn(2+)-binding residues include H110, H113, D120, D147, and H211. The segment at 234-262 (GCGAELESWFQPHQPSAKPGKTLPPPLPP) is disordered.

It belongs to the peptidase M74 family. As to quaternary structure, dimer. Zn(2+) serves as cofactor.

It localises to the periplasm. Its function is as follows. Murein endopeptidase that cleaves the D-alanyl-meso-2,6-diamino-pimelyl amide bond that connects peptidoglycan strands. Likely plays a role in the removal of murein from the sacculus. The polypeptide is Penicillin-insensitive murein endopeptidase (Yersinia enterocolitica serotype O:8 / biotype 1B (strain NCTC 13174 / 8081)).